The chain runs to 172 residues: Ribosome maturation factor RimM (172 aa).

Residues 96–168 form the PRC barrel domain; the sequence is DGEFYYHEII…RVDVEIPEGL (73 aa).

The protein belongs to the RimM family. As to quaternary structure, binds ribosomal protein uS19.

The protein localises to the cytoplasm. Its function is as follows. An accessory protein needed during the final step in the assembly of 30S ribosomal subunit, possibly for assembly of the head region. Essential for efficient processing of 16S rRNA. May be needed both before and after RbfA during the maturation of 16S rRNA. It has affinity for free ribosomal 30S subunits but not for 70S ribosomes. The sequence is that of Ribosome maturation factor RimM from Streptococcus sanguinis (strain SK36).